The primary structure comprises 313 residues: MRVVFVGTPEFAAEILRYMVKKGINIVGVVTQPDKPKGRGRKTLPTPVKVVAEEKGLPCIQPESINRKEALEFLHSVNPDVLIVASYGKILGEKVLSLPKHGCYNIHPSLLPKYRGASPIQRALENGEKKTGVTIYRMVKELDAGPIALQREVNIDPFETFDQLEKRLIELSKEMVIEFLEKLENGEIHLREQDHTRATYAPLIKKEDLFVDFSKGAETVKNKIRAYDSRPGARAFLNGKEVKLFGAMAVDSSNDEPGLIHYIDREGAWIGTGKGMVKVKYLQLPGKKKLTFWELRNGRLIEEGMKLEGRYES.

Residue 109 to 112 (SLLP) coordinates (6S)-5,6,7,8-tetrahydrofolate.

Belongs to the Fmt family.

The enzyme catalyses L-methionyl-tRNA(fMet) + (6R)-10-formyltetrahydrofolate = N-formyl-L-methionyl-tRNA(fMet) + (6S)-5,6,7,8-tetrahydrofolate + H(+). Attaches a formyl group to the free amino group of methionyl-tRNA(fMet). The formyl group appears to play a dual role in the initiator identity of N-formylmethionyl-tRNA by promoting its recognition by IF2 and preventing the misappropriation of this tRNA by the elongation apparatus. This is Methionyl-tRNA formyltransferase from Thermotoga neapolitana (strain ATCC 49049 / DSM 4359 / NBRC 107923 / NS-E).